The following is a 554-amino-acid chain: DDB1- and CUL4-associated factor 11 homolog (554 aa).

Residues 24–52 form a disordered region; the sequence is QRMKNRNDSDTDFSDDDEETSGGCPKMTP. Over residues 33-43 the composition is skewed to acidic residues; that stretch reads DTDFSDDDEET. WD repeat units follow at residues 245-284, 288-328, 336-375, 414-458, and 461-500; these read QNQC…RIRT, AHED…DGDV, GHRD…CQGG, GHSV…VSRR, and GHQA…EGVI. Residues 527 to 554 form a disordered region; that stretch reads PQRKLRKPISARNAKCPTTSSEPDDFQI.

It belongs to the WD repeat LEC14B family.

Functionally, involved in regulation of lifespan. Required for dopaminergic CEP neuron degeneration in response to Mn(2+). The sequence is that of DDB1- and CUL4-associated factor 11 homolog (wdr-23) from Caenorhabditis briggsae.